Reading from the N-terminus, the 648-residue chain is RAF proto-oncogene serine/threonine-protein kinase (648 aa).

Position 29 is a phosphoserine; by MAPK1 (Ser-29). A Phosphoserine modification is found at Ser-43. The 76-residue stretch at 56–131 (NTIRVFLPNK…IGEELQVDFL (76 aa)) folds into the RBD domain. A Phorbol-ester/DAG-type zinc finger spans residues 138 to 184 (THNFARKTFLKLAFCDICQKFLLNGFRCQTCGYKFHEHCSTKVPTMC). Zn(2+)-binding residues include His-139, Cys-152, Cys-155, Cys-165, Cys-168, His-173, Cys-176, and Cys-184. The segment at 217–335 (MRESVSRMPA…EKNKIRPRGQ (119 aa)) is disordered. A Phosphoserine; by PKA modification is found at Ser-233. Polar residues predominate over residues 239 to 271 (TFNTSSPSSEGSLSQRQRSTSTPNVHMVSTTLP). A phosphoserine mark is found at Ser-252 and Ser-259. Residue Thr-268 is modified to Phosphothreonine; by autocatalysis. Thr-269 carries the post-translational modification Phosphothreonine; by PKA. Over residues 275 to 285 (RMIEDAIRSHS) the composition is skewed to basic and acidic residues. Residues 286–301 (ESASPSALSSSPNNLS) are compositionally biased toward low complexity. Phosphoserine; by MAPK1 occurs at positions 289, 296, and 301. The interval 331-349 (RPRGQRDSSYYWEIEASEV) is interaction with PEBP1/RKIP. A Phosphoserine; by PAK1, PAK2, PAK3 and PAK5 modification is found at Ser-338. Ser-339 is modified (phosphoserine; by PAK1, PAK2 and PAK3). Tyr-340 and Tyr-341 each carry phosphotyrosine; by SRC. The region spanning 349-609 (VMLSTRIGSG…PQILSSIELL (261 aa)) is the Protein kinase domain. Residues 355 to 363 (IGSGSFGTV) and Lys-375 each bind ATP. Asp-468 serves as the catalytic Proton acceptor. The residue at position 471 (Ser-471) is a Phosphoserine. Thr-491 is subject to Phosphothreonine. Position 494 is a phosphoserine (Ser-494). Ser-497 and Ser-499 each carry phosphoserine; by PKC. Residue Arg-563 is modified to Symmetric dimethylarginine; by PRMT5. Ser-621 is subject to Phosphoserine. A Phosphoserine; by MAPK1 modification is found at Ser-642.

It belongs to the protein kinase superfamily. TKL Ser/Thr protein kinase family. RAF subfamily. In terms of assembly, monomer. Homodimer. Heterodimerizes with BRAF and this heterodimer possesses a highly increased kinase activity compared to the respective homodimers or monomers. Heterodimerization is mitogen-regulated and enhanced by 14-3-3 proteins. MAPK1/ERK2 activation can induce a negative feedback that promotes the dissociation of the heterodimer. Forms a multiprotein complex with Ras (M-Ras/MRAS), SHOC2 and protein phosphatase 1 (PPP1CA, PPP1CB and PPP1CC). Interacts with LZTR1. Interacts with Ras proteins; the interaction is antagonized by RIN1. Weakly interacts with RIT1. Interacts with STK3/MST2; the interaction inhibits its pro-apoptotic activity. Interacts (when phosphorylated at Ser-259) with YWHAZ (unphosphorylated at 'Thr-232'). Interacts with MAP3K5/ASF1 (via N-terminus) and this interaction inhibits the proapoptotic function of MAP3K5/ASK1. Interacts with PAK1 (via kinase domain). The phosphorylated form interacts with PIN1. The Ser-338 and Ser-339 phosphorylated form (by PAK1) interacts with BCL2. Interacts with PEBP1/RKIP and this interaction is enhanced if RAF1 is phosphorylated on residues Ser-338, Ser-339, Tyr-340 and Tyr-341. Interacts with ADCY2, ADCY5, ADCY6, DGKH, RCAN1/DSCR1, PPP1R12A, PKB/AKT1, PPP2CA, PPP2R1B, SPRY2, SPRY4, CNKSR1/CNK1, KSR2 and PHB/prohibitin. Interacts with ROCK2. Interacts (via N-terminus) with RGS14 (via RBD domains); the interaction mediates the formation of a ternary complex with BRAF, a ternary complex inhibited by GNAI1. Probably forms a complex composed of chaperones HSP90 and HSP70, co-chaperones CDC37, PPP5C, TSC1 and client protein TSC2, CDK4, AKT, RAF1 and NR3C1; this complex does not contain co-chaperones STIP1/HOP and PTGES3/p23. Interacts with MAP2K1/MEK1 and MAP2K2/MEK2. In its active form, interacts with PRMT5. Interacts with FAM83B; displaces 14-3-3 proteins from RAF1 and activates RAF1. Interacts with PDE8A; the interaction promotes RAF1 activity. Interacts with MFHAS1. Interacts with GLS. Interacts with YWHAZ. Interacts with NEK10 and MAP2K1; the interaction is direct with NEK10 and required for ERK1/2-signaling pathway activation in response to UV irradiation. Requires Zn(2+) as cofactor. Phosphorylation at Thr-269, Ser-338, Tyr-341, Thr-491 and Ser-494 results in its activation. Phosphorylation at Ser-29, Ser-43, Ser-289, Ser-296, Ser-301 and Ser-642 by MAPK1/ERK2 results in its inactivation. Phosphorylation at Ser-259 induces the interaction with YWHAZ and inactivates kinase activity. Dephosphorylation of Ser-259 by the SHOC2-MRAS-PP1c (SMP) complex consisting of SHOC2, GTP-bound M-Ras/MRAS and the catalytic subunit of protein phosphatase 1 (PPP1CA, PPP1CB or PPP1CC); this relieves inactivation and stimulates kinase activity. Phosphorylation at Ser-338 by PAK1 and PAK5 and Ser-339 by PAK1 is required for its mitochondrial localization. Phosphorylation at Ser-621 in response to growth factor treatment stabilizes the protein, possibly by preventing proteasomal degradation. Phosphorylation at Ser-289, Ser-296, Ser-301, Ser-338 and Ser-621 are somehow linked to the methylation potential of cells. Treatment of cells with HGF in the presence of the methylation inhibitor 5'-methylthioadenosine (MTA) results in increased phosphorylation at Ser-338 and Ser-621 and decreased phosphorylation at Ser-296, Ser-301 and Ser-338. Dephosphorylation at Ser-338 by PPP5C results in a decreased of activity. Post-translationally, methylated in response to EGF treatment. This modification leads to destabilization of the protein, possibly through proteasomal degradation.

Its subcellular location is the cytoplasm. It localises to the cell membrane. The protein resides in the mitochondrion. The protein localises to the nucleus. The enzyme catalyses L-seryl-[protein] + ATP = O-phospho-L-seryl-[protein] + ADP + H(+). It carries out the reaction L-threonyl-[protein] + ATP = O-phospho-L-threonyl-[protein] + ADP + H(+). With respect to regulation, regulation is a highly complex process involving membrane recruitment, protein-protein interactions, dimerization, and phosphorylation/dephosphorylation events. Ras-GTP recruits RAF1 to the membrane, thereby promoting its activation. The inactive conformation of RAF1 is maintained by autoinhibitory interactions occurring between the N-terminal regulatory and the C-terminal catalytic domains and by the binding of a 14-3-3 protein that contacts two phosphorylation sites, Ser-259 and Ser-621. Upon mitogenic stimulation, Ras and PPP2R1A cooperate to release autoinhibition and the subsequent phosphorylation of activating sites: Ser-338, Tyr-341, Thr-491, and Ser-494, yields a fully active kinase. Through a negative feedback mechanism involving MAPK1/ERK2, RAF1 is phosphorylated on Ser-29, Ser-43, Ser-289, Ser-296, Ser-301 and Ser-642 by MAPK1/ERK2, which yields an inactive, desensitized kinase. The signaling-competent conformation of RAF1 is finally re-established by the coordinated action of PIN1, a prolyl isomerase that converts pSer and pThr residues from the cis to the trans conformation, which is preferentially recognized and dephosphorylated by PPP2R1A. Activated by homodimerization and heterodimerization (with BRAF). Also regulated through association with other proteins such as KSR2, CNKSR1/CNK1, PEBP1/RKIP, PHB/prohibitin and SPRY4. PEBP1/RKIP acts by dissociating RAF1 from its substrates MAP2K1/MEK1 and MAP2K2/MEK2. PHB/prohibitin facilitates the displacement of 14-3-3 from RAF1 by activated Ras, thereby promoting cell membrane localization and phosphorylation of RAF1 at the activating Ser-338. SPRY4 inhibits Ras-independent, but not Ras-dependent, activation of RAF1. CNKSR1/CNK1 regulates Src-mediated RAF1 activation. Its function is as follows. Serine/threonine-protein kinase that acts as a regulatory link between the membrane-associated Ras GTPases and the MAPK/ERK cascade, and this critical regulatory link functions as a switch determining cell fate decisions including proliferation, differentiation, apoptosis, survival and oncogenic transformation. RAF1 activation initiates a mitogen-activated protein kinase (MAPK) cascade that comprises a sequential phosphorylation of the dual-specific MAPK kinases (MAP2K1/MEK1 and MAP2K2/MEK2) and the extracellular signal-regulated kinases (MAPK3/ERK1 and MAPK1/ERK2). The phosphorylated form of RAF1 (on residues Ser-338 and Ser-339, by PAK1) phosphorylates BAD/Bcl2-antagonist of cell death at 'Ser-75'. Phosphorylates adenylyl cyclases: ADCY2, ADCY5 and ADCY6, resulting in their activation. Phosphorylates PPP1R12A resulting in inhibition of the phosphatase activity. Can promote NF-kB activation and inhibit signal transducers involved in motility (ROCK2), apoptosis (MAP3K5/ASK1 and STK3/MST2), proliferation and angiogenesis (RB1). Can protect cells from apoptosis also by translocating to the mitochondria where it binds BCL2 and displaces BAD/Bcl2-antagonist of cell death. Regulates Rho signaling and migration, and is required for normal wound healing. Plays a role in the oncogenic transformation of epithelial cells via repression of the TJ protein, occludin (OCLN) by inducing the up-regulation of a transcriptional repressor SNAI2/SLUG, which induces down-regulation of OCLN. Restricts caspase activation in response to selected stimuli, notably Fas stimulation, pathogen-mediated macrophage apoptosis, and erythroid differentiation. Phosphorylates TNNT2/cardiac muscle troponin T. This Rattus norvegicus (Rat) protein is RAF proto-oncogene serine/threonine-protein kinase (Raf1).